Here is a 212-residue protein sequence, read N- to C-terminus: Photosynthetic NDH subunit of subcomplex B 5, chloroplastic (212 aa).

The N-terminal 48 residues, Met1–Ser48, are a transit peptide targeting the chloroplast. The next 2 helical transmembrane spans lie at Phe115–Ala135 and Pro136–Met156.

In terms of assembly, part of the chloroplast NDH complex, composed of a mixture of chloroplast and nucleus encoded subunits. Component of the NDH subcomplex B, at least composed of PnsB1, PnsB2, PnsB3, PnsB4 and PnsB5.

It localises to the plastid. The protein localises to the chloroplast membrane. Functionally, NDH shuttles electrons from NAD(P)H:plastoquinone, via FMN and iron-sulfur (Fe-S) centers, to quinones in the photosynthetic chain and possibly in a chloroplast respiratory chain. The immediate electron acceptor for the enzyme in this species is believed to be plastoquinone. Couples the redox reaction to proton translocation, and thus conserves the redox energy in a proton gradient. This is Photosynthetic NDH subunit of subcomplex B 5, chloroplastic from Arabidopsis thaliana (Mouse-ear cress).